A 459-amino-acid chain; its full sequence is Argininosuccinate lyase (459 aa).

The protein belongs to the lyase 1 family. Argininosuccinate lyase subfamily.

The protein resides in the cytoplasm. It catalyses the reaction 2-(N(omega)-L-arginino)succinate = fumarate + L-arginine. It participates in amino-acid biosynthesis; L-arginine biosynthesis; L-arginine from L-ornithine and carbamoyl phosphate: step 3/3. This is Argininosuccinate lyase from Prochlorococcus marinus (strain MIT 9215).